A 151-amino-acid polypeptide reads, in one-letter code: Caveolin-3 (151 aa).

The Cytoplasmic portion of the chain corresponds to 1 to 83 (MMTEEHTDLE…RLLSTLLGVP (83 aa)). Lysine 38 is covalently cross-linked (Glycyl lysine isopeptide (Lys-Gly) (interchain with G-Cter in SUMO3)). The helical intramembrane region spans 84–104 (LALLWGFLFACISFCHIWAVV). Residues 105–151 (PCIKSYLIEIQCISHIYSLCIRTFCNPLFAALGQVCSNIKVVLRREG) are Cytoplasmic-facing.

The protein belongs to the caveolin family. As to quaternary structure, homooligomer. Interacts with DYSF. Interacts with DLG1 and KCNA5; forms a ternary complex. Interacts with DAG1 (via its C-terminal); the interaction prevents binding of DAG1 with DMD. Interacts with TRIM72. Interacts with MUSK; may regulate MUSK signaling. Interacts with POPDC1. Interacts with CAVIN1, CAVIN2 and CAVIN4. In terms of processing, sumoylation with SUMO3 by PIAS4 may reduce agonist-induced internalization and desensitization of adrenergic receptor ABRD2. Expressed predominantly in muscle.

The protein localises to the golgi apparatus membrane. Its subcellular location is the cell membrane. The protein resides in the membrane. It localises to the caveola. It is found in the sarcolemma. In terms of biological role, may act as a scaffolding protein within caveolar membranes. Interacts directly with G-protein alpha subunits and can functionally regulate their activity. May also regulate voltage-gated potassium channels. Plays a role in the sarcolemma repair mechanism of both skeletal muscle and cardiomyocytes that permits rapid resealing of membranes disrupted by mechanical stress. Mediates the recruitment of CAVIN2 and CAVIN3 proteins to the caveolae. In Rattus norvegicus (Rat), this protein is Caveolin-3 (Cav3).